We begin with the raw amino-acid sequence, 174 residues long: U-stichotoxin-Hau2a (174 aa).

Positions 1–18 (MKPIFIVALLFSTCLVNA) are cleaved as a signal peptide. Residues 19-33 (KPSINDADIKREPEP) constitute a propeptide that is removed on maturation. P39 carries the hydroxyproline modification. Disulfide bonds link C40–C51 and C43–C58. Positions 61–67 (RKREPEP) are excised as a propeptide. Hydroxyproline is present on P73. Cystine bridges form between C74/C85 and C77/C92. Residues 95–101 (RKREPEP) constitute a propeptide that is removed on maturation. P107 carries the post-translational modification Hydroxyproline. Disulfide bonds link C108-C119 and C111-C126. Residues 129 to 135 (RKREPEP) constitute a propeptide that is removed on maturation. P141 carries the post-translational modification Hydroxyproline. Cystine bridges form between C142/C153 and C145/C160. A propeptide spanning residues 163–174 (RKREPENQDLWS) is cleaved from the precursor.

Belongs to the sea anemone BBH family.

It is found in the secreted. The protein localises to the nematocyst. Its function is as follows. Neurotoxin that paralyzes freshwater crabs at high concentration. This is U-stichotoxin-Hau2a from Heteractis aurora (Banded sea anemone).